The following is a 276-amino-acid chain: Glutamate 5-kinase (276 aa).

ATP is bound at residue K14. Substrate contacts are provided by S54, D141, and N157. ATP-binding positions include 177–178 (SD) and 219–225 (TGGMLTK).

This sequence belongs to the glutamate 5-kinase family.

It is found in the cytoplasm. It catalyses the reaction L-glutamate + ATP = L-glutamyl 5-phosphate + ADP. Its pathway is amino-acid biosynthesis; L-proline biosynthesis; L-glutamate 5-semialdehyde from L-glutamate: step 1/2. Its function is as follows. Catalyzes the transfer of a phosphate group to glutamate to form L-glutamate 5-phosphate. This chain is Glutamate 5-kinase, found in Listeria welshimeri serovar 6b (strain ATCC 35897 / DSM 20650 / CCUG 15529 / CIP 8149 / NCTC 11857 / SLCC 5334 / V8).